We begin with the raw amino-acid sequence, 20 residues long: DINGGGATLPQALYQTSGVL.

In terms of tissue distribution, expressed by the venom gland.

The protein resides in the secreted. The enzyme catalyses a phosphate monoester + H2O = an alcohol + phosphate. Its function is as follows. Has hemorrhagic activity. The sequence is that of Alkaline phosphatase from Deinagkistrodon acutus (Hundred-pace snake).